Consider the following 192-residue polypeptide: Imidazoleglycerol-phosphate dehydratase (192 aa).

Belongs to the imidazoleglycerol-phosphate dehydratase family.

The protein localises to the cytoplasm. It catalyses the reaction D-erythro-1-(imidazol-4-yl)glycerol 3-phosphate = 3-(imidazol-4-yl)-2-oxopropyl phosphate + H2O. The protein operates within amino-acid biosynthesis; L-histidine biosynthesis; L-histidine from 5-phospho-alpha-D-ribose 1-diphosphate: step 6/9. The polypeptide is Imidazoleglycerol-phosphate dehydratase (Clostridioides difficile (strain 630) (Peptoclostridium difficile)).